Reading from the N-terminus, the 262-residue chain is MAHLLEKTRKITSILKRSEEQLQDELPYNAITRQLADIIHCNACIINSKGRLLGYFMRYKTNTDRVEQFFQTKIFPDDYVQGANMIYETEANLPVEHDMSIFPIESRDDFPDGLTTIAPIHVSGIRLGSLIIWRNDKKFEDEDLVLVEIASTVVGIQLLNFQREEDEKNIRRRTAVTMAVNTLSYSELRAVSAILGELNGNEGKLTASVIADRIGITRSVIVNALRKLESAGIIESRSLGMKGTYLKVLISDIFEEVKKRDY.

A GAF domain region spans residues 1–159; sequence MAHLLEKTRK…ASTVVGIQLL (159 aa). A DNA-binding region (H-T-H motif) is located at residues 207–226; sequence ASVIADRIGITRSVIVNALR.

This sequence belongs to the CodY family.

The protein localises to the cytoplasm. Its function is as follows. DNA-binding global transcriptional regulator which is involved in the adaptive response to starvation and acts by directly or indirectly controlling the expression of numerous genes in response to nutrient availability. During rapid exponential growth, CodY is highly active and represses genes whose products allow adaptation to nutrient depletion. This chain is Global transcriptional regulator CodY, found in Streptococcus pneumoniae serotype 4 (strain ATCC BAA-334 / TIGR4).